The chain runs to 102 residues: Small ribosomal subunit protein uS10 (102 aa).

The protein belongs to the universal ribosomal protein uS10 family. Part of the 30S ribosomal subunit.

Functionally, involved in the binding of tRNA to the ribosomes. This chain is Small ribosomal subunit protein uS10, found in Thermoanaerobacter pseudethanolicus (strain ATCC 33223 / 39E) (Clostridium thermohydrosulfuricum).